The primary structure comprises 250 residues: Transcriptional activator protein EchR (250 aa).

Residues 173–238 form the HTH luxR-type domain; the sequence is KSQEPNIFSQ…HAIRLGVEMN (66 aa). Positions 197–216 form a DNA-binding region, H-T-H motif; sequence YQEIALILGITTSTVKFHIG.

It belongs to the autoinducer-regulated transcriptional regulatory protein family.

Functions as a potential ohlL-responsive transcriptional regulator. The polypeptide is Transcriptional activator protein EchR (echR) (Dickeya chrysanthemi (Pectobacterium chrysanthemi)).